The chain runs to 126 residues: Protein ApaG (126 aa).

The region spanning 2-126 is the ApaG domain; the sequence is SALDDSIRVE…FRLALPGLLH (125 aa).

This is Protein ApaG from Shewanella sp. (strain MR-7).